We begin with the raw amino-acid sequence, 297 residues long: F-box only protein 2 (297 aa).

Residues 1–42 form a disordered region; it reads MDGDGDPESVGQPEEASPEEQQEEACAEEANGGEERPEDDGE. A compositionally biased stretch (acidic residues) spans 16–27; sequence ASPEEQQEEACA. One can recognise an F-box domain in the interval 45–92; that stretch reads AAYLDELPEPLLLRVLAELPAAQLVQACRLVCLRWKELVDGAPLWLLK. An FBA domain is found at 114–297; that stretch reads FYFLSKRRRN…VTNSSVWVEP (184 aa). A carbohydrate is bound by residues 211 to 213 and 279 to 280; these read RRD and YW.

In terms of assembly, component of the SCF(FBXO2) complex consisting of CUL1, RBX1, SKP1 and FBXO2. Predominantly detected as heterodimer with SKP1; the heterodimer with SKP1 is not part of the SCF(FBXO2) complex.

It localises to the cytoplasm. Its subcellular location is the microsome membrane. The protein operates within protein modification; protein ubiquitination. Its function is as follows. Substrate recognition component of a SCF (SKP1-CUL1-F-box protein) E3 ubiquitin-protein ligase complex that mediates the ubiquitination and subsequent proteasomal degradation of target proteins. Involved in the endoplasmic reticulum-associated degradation pathway (ERAD) for misfolded lumenal proteins by recognizing and binding sugar chains on unfolded glycoproteins that are retrotranslocated into the cytosol and promoting their ubiquitination and subsequent degradation. Prevents formation of cytosolic aggregates of unfolded glycoproteins that have been retrotranslocated into the cytosol. Able to recognize and bind denatured glycoproteins, preferentially those of the high-mannose type. The protein is F-box only protein 2 (FBXO2) of Bos taurus (Bovine).